The chain runs to 396 residues: Tryptophan synthase beta chain (396 aa).

Lys-88 is modified (N6-(pyridoxal phosphate)lysine).

Belongs to the TrpB family. In terms of assembly, tetramer of two alpha and two beta chains. It depends on pyridoxal 5'-phosphate as a cofactor.

The catalysed reaction is (1S,2R)-1-C-(indol-3-yl)glycerol 3-phosphate + L-serine = D-glyceraldehyde 3-phosphate + L-tryptophan + H2O. Its pathway is amino-acid biosynthesis; L-tryptophan biosynthesis; L-tryptophan from chorismate: step 5/5. The beta subunit is responsible for the synthesis of L-tryptophan from indole and L-serine. The polypeptide is Tryptophan synthase beta chain (Shewanella putrefaciens (strain CN-32 / ATCC BAA-453)).